The following is a 285-amino-acid chain: Energy-coupling factor transporter ATP-binding protein EcfA2 (285 aa).

In terms of domain architecture, ABC transporter spans Ile-3–Ser-245. Gly-40–Ser-47 provides a ligand contact to ATP.

The protein belongs to the ABC transporter superfamily. Energy-coupling factor EcfA family. Forms a stable energy-coupling factor (ECF) transporter complex composed of 2 membrane-embedded substrate-binding proteins (S component), 2 ATP-binding proteins (A component) and 2 transmembrane proteins (T component).

Its subcellular location is the cell membrane. ATP-binding (A) component of a common energy-coupling factor (ECF) ABC-transporter complex. Unlike classic ABC transporters this ECF transporter provides the energy necessary to transport a number of different substrates. In Lactobacillus acidophilus (strain ATCC 700396 / NCK56 / N2 / NCFM), this protein is Energy-coupling factor transporter ATP-binding protein EcfA2.